A 169-amino-acid polypeptide reads, in one-letter code: Peptide deformylase (169 aa).

Cysteine 91 and histidine 133 together coordinate Fe cation. Glutamate 134 is a catalytic residue. Histidine 137 is a binding site for Fe cation.

Belongs to the polypeptide deformylase family. It depends on Fe(2+) as a cofactor.

It carries out the reaction N-terminal N-formyl-L-methionyl-[peptide] + H2O = N-terminal L-methionyl-[peptide] + formate. In terms of biological role, removes the formyl group from the N-terminal Met of newly synthesized proteins. Requires at least a dipeptide for an efficient rate of reaction. N-terminal L-methionine is a prerequisite for activity but the enzyme has broad specificity at other positions. This chain is Peptide deformylase, found in Pectobacterium atrosepticum (strain SCRI 1043 / ATCC BAA-672) (Erwinia carotovora subsp. atroseptica).